The primary structure comprises 251 residues: MRKPVIAGNWKLFKTKNEALALIEELAPLVSGVDSVEIVVAPVFTVLPTLPAALAGTGISLAAQDVFWEEEGAFTGEVSPRMLLDAGASHVIIGHSERRQYFGETEETVNKKVKAALKGALVPIVCIGETLEAREAGDTFKVLERQLKGGLEGLTGTQFAPVIVAYEPVWAIGTGKVASDDQAQEAHAFIRGVIAGLFGKSAADKVRILYGGSVKPDNVKGLMSRPDIDGALVGGASLKGASFASIVRYSE.

9 to 11 (NWK) is a substrate binding site. The active-site Electrophile is histidine 95. Glutamate 167 (proton acceptor) is an active-site residue. Substrate contacts are provided by residues glycine 173, serine 213, and 234 to 235 (GG).

It belongs to the triosephosphate isomerase family. In terms of assembly, homodimer.

It localises to the cytoplasm. It catalyses the reaction D-glyceraldehyde 3-phosphate = dihydroxyacetone phosphate. It participates in carbohydrate biosynthesis; gluconeogenesis. Its pathway is carbohydrate degradation; glycolysis; D-glyceraldehyde 3-phosphate from glycerone phosphate: step 1/1. In terms of biological role, involved in the gluconeogenesis. Catalyzes stereospecifically the conversion of dihydroxyacetone phosphate (DHAP) to D-glyceraldehyde-3-phosphate (G3P). This chain is Triosephosphate isomerase, found in Citrifermentans bemidjiense (strain ATCC BAA-1014 / DSM 16622 / JCM 12645 / Bem) (Geobacter bemidjiensis).